A 567-amino-acid chain; its full sequence is Hexose transporter HXT11 (567 aa).

Polar residues predominate over residues 1 to 22; sequence MSGVNNTSANELSTTMSNSNSA. Residues 1–45 form a disordered region; sequence MSGVNNTSANELSTTMSNSNSAVGAPSVKTEHGDSKNSLNLDANE. At 1 to 56 the chain is on the cytoplasmic side; it reads MSGVNNTSANELSTTMSNSNSAVGAPSVKTEHGDSKNSLNLDANEPPIDLPQKPLS. Residues 57–77 form a helical membrane-spanning segment; it reads AYTTVAILCLMIAFGGFIFGW. The Extracellular segment spans residues 78 to 112; it reads DTGTISGFVNLSDFIRRFGQKNDKGTYYLSKVRMG. N87 carries an N-linked (GlcNAc...) asparagine glycan. The helical transmembrane segment at 113-133 threads the bilayer; sequence LIVSIFNIGCAIGGIVLSKVG. The Cytoplasmic segment spans residues 134 to 139; that stretch reads DIYGRR. A helical membrane pass occupies residues 140 to 160; it reads IGLITVTAIYVVGILIQITSI. Residues 161-170 lie on the Extracellular side of the membrane; it reads NKWYQYFIGR. The chain crosses the membrane as a helical span at residues 171–191; it reads IISGLGVGGIAVLSPMLISEV. The Cytoplasmic portion of the chain corresponds to 192-197; it reads APKHIR. A helical transmembrane segment spans residues 198–218; it reads GTLVQLYQLMGTMGIFLGYCT. Residues 219–232 are Extracellular-facing; that stretch reads NYGTKNYHNATQWR. N-linked (GlcNAc...) asparagine glycosylation is present at N227. A helical membrane pass occupies residues 233–253; sequence VGLGLCFAWATFMVSGMMFVP. At 254–336 the chain is on the cytoplasmic side; it reads ESPRYLIEVG…IQSLQQLTGD (83 aa). A helical transmembrane segment spans residues 337–353; it reads NYFFYYGTTIFKSVGLK. Residues 354–359 are Extracellular-facing; that stretch reads DSFQTS. Residues 360–377 form a helical membrane-spanning segment; it reads IIIGVVNFFSSFIAVYTI. The Cytoplasmic segment spans residues 378–384; it reads ERFGRRT. A helical membrane pass occupies residues 385–405; sequence CLLWGAASMLCCFAVFASVGV. Over 406-429 the chain is Extracellular; it reads TKLWPQGSSHQDITSQGAGNCMIV. The helical transmembrane segment at 430-450 threads the bilayer; that stretch reads FTMFFIFSFATTWAGGCYVIV. Residues 451 to 467 lie on the Cytoplasmic side of the membrane; the sequence is SETFPLRVKSRGMAIAT. A helical transmembrane segment spans residues 468–488; sequence AANWMWGFLISFFTPFITGAI. Residue N489 is a topological domain, extracellular. Residues 490–510 traverse the membrane as a helical segment; it reads FYYGYVFLGCLVFAYFYVFFF. The Cytoplasmic portion of the chain corresponds to 511–567; sequence VPETKGLTLEEVNTMWLEGVPAWKSASWVPPERRTADYDADAIDHDNRPIYKRFFSS.

This sequence belongs to the major facilitator superfamily. Sugar transporter (TC 2.A.1.1) family.

It is found in the membrane. Probable glucose transporter. This is Hexose transporter HXT11 (HXT11) from Saccharomyces cerevisiae (strain ATCC 204508 / S288c) (Baker's yeast).